The primary structure comprises 325 residues: Glutaminase (325 aa).

Ser-76, Asn-125, Glu-169, Asn-176, Tyr-200, Tyr-252, and Val-270 together coordinate substrate.

It belongs to the glutaminase family. Homotetramer.

It carries out the reaction L-glutamine + H2O = L-glutamate + NH4(+). In Clavibacter michiganensis subsp. michiganensis (strain NCPPB 382), this protein is Glutaminase.